Here is a 504-residue protein sequence, read N- to C-terminus: Putative glycerol-3-phosphate transporter 2 (504 aa).

12 helical membrane passes run 31–51, 84–104, 116–136, 145–165, 178–198, 210–230, 280–302, 324–344, 352–372, 378–398, 424–444, and 452–472; these read LSFKQYQALVFILTFVAYIAF, ALLGQIDLAFLSVYAVGMFVA, FLTIGMIGTGLFTALFGVAFW, FLAVQVMAGLFQSIGWPCIVA, MIMGVWSAHTSLGNIAGSLIA, FLGPAFLMTFLGIVVYLFLPV, IPGVAPFAFCLFFTKLVSYTFLY, GNLSTIFDVGGVVGGVLAGYI, AITAAGFMYLAIPALFLYRVF, TINVILMFTSGVFIIGPFALI, AIIDGTGSVGAAIGPVLTGYI, and VFYMLMTAALISGLLLTKLII.

This sequence belongs to the major facilitator superfamily. Organophosphate:Pi antiporter (OPA) (TC 2.A.1.4) family. Expressed in the root-hair differentiation zone.

It is found in the membrane. This is Putative glycerol-3-phosphate transporter 2 from Arabidopsis thaliana (Mouse-ear cress).